The primary structure comprises 153 residues: MGVLDHVSEYFDCSHGSSKRHKSLQTVDVRVLIDCEGCERKVRRALEGMRGIRDVTIEPNAQKVTVVGYVEPNKVVARIIHRTGKRAELYPFVPYDVVAHPYASGVYDNRAPTGYVRNTEYDPHVSRLARASSTEVRYTTAFSDENASACVVM.

Positions 24-88 constitute an HMA domain; it reads LQTVDVRVLI…IIHRTGKRAE (65 aa). Residues Cys35 and Cys38 each contribute to the a metal cation site. Cys150 is subject to Cysteine methyl ester. The S-farnesyl cysteine moiety is linked to residue Cys150. The propeptide at 151-153 is removed in mature form; that stretch reads VVM.

This sequence belongs to the HIPP family. As to expression, expressed in roots, shoot apical meristem, trichomes and flower buds.

The protein resides in the membrane. Heavy-metal-binding protein. Binds cadmium. May be involved in cadmium transport and play a role in cadmium detoxification. The polypeptide is Heavy metal-associated isoprenylated plant protein 25 (Arabidopsis thaliana (Mouse-ear cress)).